A 247-amino-acid chain; its full sequence is 1-(5-phosphoribosyl)-5-[(5-phosphoribosylamino)methylideneamino] imidazole-4-carboxamide isomerase (247 aa).

D8 (proton acceptor) is an active-site residue. The active-site Proton donor is the D129.

It belongs to the HisA/HisF family.

Its subcellular location is the cytoplasm. It catalyses the reaction 1-(5-phospho-beta-D-ribosyl)-5-[(5-phospho-beta-D-ribosylamino)methylideneamino]imidazole-4-carboxamide = 5-[(5-phospho-1-deoxy-D-ribulos-1-ylimino)methylamino]-1-(5-phospho-beta-D-ribosyl)imidazole-4-carboxamide. Its pathway is amino-acid biosynthesis; L-histidine biosynthesis; L-histidine from 5-phospho-alpha-D-ribose 1-diphosphate: step 4/9. In Rhodospirillum centenum (strain ATCC 51521 / SW), this protein is 1-(5-phosphoribosyl)-5-[(5-phosphoribosylamino)methylideneamino] imidazole-4-carboxamide isomerase.